The chain runs to 70 residues: Large ribosomal subunit protein uL29 (70 aa).

It belongs to the universal ribosomal protein uL29 family.

The polypeptide is Large ribosomal subunit protein uL29 (Gloeobacter violaceus (strain ATCC 29082 / PCC 7421)).